The chain runs to 420 residues: Reticulon-4 receptor-like 2 (420 aa).

Positions 1–30 (MLPGLRRLLQGPASACLLLTLLALPSVTPS) are cleaved as a signal peptide. 2 disulfide bridges follow: C31–C37 and C35–C46. Positions 31–60 (CPMLCTCYSSPPTVSCQANNFSSVPLSLPP) constitute an LRRNT domain. N-linked (GlcNAc...) asparagine glycosylation occurs at N50. 8 LRR repeats span residues 61 to 82 (STQRLFLQNNLIRSLRPGTFGP), 83 to 104 (NLLTLWLFSNNLSTIHPGTFRH), 107 to 129 (ALEELDLGDNRHLRSLEPDTFQG), 132 to 153 (RLQSLHLYRCQLSSLPGNIFRG), 156 to 177 (SLQYLYLQENSLLHLQDDLFAD), 180 to 201 (NLSHLFLHGNRLRLLTEHVFRG), 204 to 225 (SLDRLLLHGNRLQGVHRAAFHG), and 228 to 249 (RLTILYLFNNSLASLPGEALAD). N93 carries N-linked (GlcNAc...) asparagine glycosylation. N236 carries N-linked (GlcNAc...) asparagine glycosylation. One can recognise an LRRCT domain in the interval 261–312 (NPWACDCRARPLWAWFQRARVSSSDVTCATPPERQGRDLRALRDSDFQACPP). 2 disulfide bridges follow: C265–C288 and C267–C310. Residues 286–399 (VTCATPPERQ…CQAPADSRGP (114 aa)) form a disordered region. Positions 294–306 (RQGRDLRALRDSD) are enriched in basic and acidic residues. The segment at 315-327 (PTRPGSRARGNSS) is important for interaction with MAG. The segment covering 351–360 (LPAEDSRGRQ) has biased composition (basic and acidic residues). G398 is lipidated: GPI-anchor amidated glycine. A propeptide spans 399 to 420 (PALSAGLRTPLLCLLPLALHHL) (removed in mature form).

Belongs to the Nogo receptor family. As to quaternary structure, interaction with MAG is controversial, and may be indirect. Interacts with MAG. Does not interact with OMG and RTN4. In terms of processing, undergoes zinc metalloproteinase-mediated ectodomain shedding in neuroblastoma cells; is released both as a full-length ectodomain and an N-terminal fragment containing the leucine-rich repeat (LRR) region of the protein. Post-translationally, N-glycosylated. Detected in brain. Detected in hippocampus neurons (at protein level).

It is found in the cell membrane. The protein resides in the membrane raft. The protein localises to the cell projection. It localises to the dendrite. Its subcellular location is the axon. It is found in the perikaryon. Functionally, cell surface receptor that plays a functionally redundant role in the inhibition of neurite outgrowth mediated by MAG. Plays a functionally redundant role in postnatal brain development. Contributes to normal axon migration across the brain midline and normal formation of the corpus callosum. Does not seem to play a significant role in regulating axon regeneration in the adult central nervous system. Protects motoneurons against apoptosis; protection against apoptosis is probably mediated by MAG. Like other family members, plays a role in restricting the number dendritic spines and the number of synapses that are formed during brain development. Signaling mediates activation of Rho and downstream reorganization of the actin cytoskeleton. This Mus musculus (Mouse) protein is Reticulon-4 receptor-like 2.